A 150-amino-acid chain; its full sequence is Globin-2 A chain (150 aa).

The residue at position 2 (valine 2) is a Blocked amino end (Val). Residues 10–150 enclose the Globin domain; the sequence is CGSEAIKANL…ALVGVVQAAL (141 aa). Histidine 102 is a binding site for heme b.

The protein belongs to the globin family. As to quaternary structure, heterotetramer of two alpha chains and two beta chains.

The protein is Globin-2 A chain of Anadara inaequivalvis (Inequivalve ark).